Here is an 89-residue protein sequence, read N- to C-terminus: Small ribosomal subunit protein uS15 (89 aa).

Belongs to the universal ribosomal protein uS15 family. As to quaternary structure, part of the 30S ribosomal subunit. Forms a bridge to the 50S subunit in the 70S ribosome, contacting the 23S rRNA.

In terms of biological role, one of the primary rRNA binding proteins, it binds directly to 16S rRNA where it helps nucleate assembly of the platform of the 30S subunit by binding and bridging several RNA helices of the 16S rRNA. Its function is as follows. Forms an intersubunit bridge (bridge B4) with the 23S rRNA of the 50S subunit in the ribosome. The sequence is that of Small ribosomal subunit protein uS15 from Nostoc sp. (strain PCC 7120 / SAG 25.82 / UTEX 2576).